The primary structure comprises 191 residues: Accessory gene regulator protein B (191 aa).

5 helical membrane-spanning segments follow: residues 45 to 65, 81 to 101, 108 to 128, 144 to 164, and 165 to 185; these read IVVY…TVHL, STFA…WILI, IFMI…SPAI, ITAI…KQPF, and NELV…IFFP.

It belongs to the AgrB family.

The protein resides in the cell membrane. Its function is as follows. Essential for the production of a quorum sensing system signal molecule, the autoinducing peptide (AIP). This quorum sensing system is responsible for the regulation of the expression of virulence factor genes. Involved in the proteolytic processing of AgrD, the precursor of AIP. The protein is Accessory gene regulator protein B of Staphylococcus carnosus (strain TM300).